Consider the following 183-residue polypeptide: Crossover junction endodeoxyribonuclease RuvC (183 aa).

Active-site residues include aspartate 7, glutamate 66, and aspartate 138. Mg(2+) contacts are provided by aspartate 7, glutamate 66, and aspartate 138.

It belongs to the RuvC family. Homodimer which binds Holliday junction (HJ) DNA. The HJ becomes 2-fold symmetrical on binding to RuvC with unstacked arms; it has a different conformation from HJ DNA in complex with RuvA. In the full resolvosome a probable DNA-RuvA(4)-RuvB(12)-RuvC(2) complex forms which resolves the HJ. The cofactor is Mg(2+).

The protein resides in the cytoplasm. It carries out the reaction Endonucleolytic cleavage at a junction such as a reciprocal single-stranded crossover between two homologous DNA duplexes (Holliday junction).. The RuvA-RuvB-RuvC complex processes Holliday junction (HJ) DNA during genetic recombination and DNA repair. Endonuclease that resolves HJ intermediates. Cleaves cruciform DNA by making single-stranded nicks across the HJ at symmetrical positions within the homologous arms, yielding a 5'-phosphate and a 3'-hydroxyl group; requires a central core of homology in the junction. The consensus cleavage sequence is 5'-(A/T)TT(C/G)-3'. Cleavage occurs on the 3'-side of the TT dinucleotide at the point of strand exchange. HJ branch migration catalyzed by RuvA-RuvB allows RuvC to scan DNA until it finds its consensus sequence, where it cleaves and resolves the cruciform DNA. This is Crossover junction endodeoxyribonuclease RuvC from Burkholderia ambifaria (strain ATCC BAA-244 / DSM 16087 / CCUG 44356 / LMG 19182 / AMMD) (Burkholderia cepacia (strain AMMD)).